The chain runs to 88 residues: Small ribosomal subunit protein uS15 (88 aa).

It belongs to the universal ribosomal protein uS15 family. In terms of assembly, part of the 30S ribosomal subunit. Forms a bridge to the 50S subunit in the 70S ribosome, contacting the 23S rRNA.

Its function is as follows. One of the primary rRNA binding proteins, it binds directly to 16S rRNA where it helps nucleate assembly of the platform of the 30S subunit by binding and bridging several RNA helices of the 16S rRNA. Functionally, forms an intersubunit bridge (bridge B4) with the 23S rRNA of the 50S subunit in the ribosome. This chain is Small ribosomal subunit protein uS15, found in Thermoanaerobacter pseudethanolicus (strain ATCC 33223 / 39E) (Clostridium thermohydrosulfuricum).